Reading from the N-terminus, the 249-residue chain is LexA repressor (249 aa).

The tract at residues M1–V26 is disordered. Positions R9 to P18 are enriched in polar residues. Positions M48–S68 form a DNA-binding region, H-T-H motif. Residues S173 and K210 each act as for autocatalytic cleavage activity in the active site.

Belongs to the peptidase S24 family. As to quaternary structure, homodimer.

The catalysed reaction is Hydrolysis of Ala-|-Gly bond in repressor LexA.. Represses a number of genes involved in the response to DNA damage (SOS response), including recA and lexA. In the presence of single-stranded DNA, RecA interacts with LexA causing an autocatalytic cleavage which disrupts the DNA-binding part of LexA, leading to derepression of the SOS regulon and eventually DNA repair. The sequence is that of LexA repressor from Arthrobacter sp. (strain FB24).